A 190-amino-acid polypeptide reads, in one-letter code: Putative CRISPR system CMR subunit Cmr7 2 (190 aa).

It belongs to the CRISPR system Cmr7 family. Homodimer.

CRISPR (clustered regularly interspaced short palindromic repeat) is an adaptive immune system that provides protection against mobile genetic elements (viruses, transposable elements and conjugative plasmids). CRISPR clusters contain spacers, sequences complementary to antecedent mobile elements, and target invading nucleic acids. CRISPR clusters are transcribed and processed into CRISPR RNA (crRNA). This Saccharolobus solfataricus (strain ATCC 35092 / DSM 1617 / JCM 11322 / P2) (Sulfolobus solfataricus) protein is Putative CRISPR system CMR subunit Cmr7 2 (cmr7b).